The following is a 56-amino-acid chain: MAAKGNREKIRLVSSAETGHFYTTTKNKRNMPEKMEIKKFDPVVRKHVIYKEAKIK.

The protein belongs to the bacterial ribosomal protein bL33 family.

The protein is Large ribosomal subunit protein bL33 of Actinobacillus pleuropneumoniae serotype 5b (strain L20).